A 382-amino-acid polypeptide reads, in one-letter code: Proton extrusion protein PxcA (382 aa).

The next 4 membrane-spanning stretches (helical) occupy residues 162 to 182, 257 to 277, 305 to 325, and 340 to 360; these read ILLL…TYIV, AIKN…VCLV, IILF…TVLL, and FILL…KYWI.

The protein belongs to the CemA family.

The protein localises to the cell inner membrane. Functionally, required for H(+) efflux immediately after light irradiation to form a rapid H(+) concentration gradient across the thylakoid membranes. Together with PxcL, contributes to transient H(+) uptake following dark to light transition. The chain is Proton extrusion protein PxcA from Parasynechococcus marenigrum (strain WH8102).